The chain runs to 380 residues: Flap endonuclease 1-A (380 aa).

The tract at residues 1 to 105 (MGIKGLTKLL…EELAKRFSKR (105 aa)) is N-domain. D34 contributes to the Mg(2+) binding site. DNA is bound at residue R71. Residues D87, E159, E161, D180, and D182 each coordinate Mg(2+). The tract at residues 123–254 (AVEKLSKRTV…QTALKLIRQH (132 aa)) is I-domain. E159 lines the DNA pocket. Residues G232 and D234 each contribute to the DNA site. D234 is a binding site for Mg(2+). Residues 336 to 344 (SQGRLESFF) are interaction with PCNA. A disordered region spans residues 351 to 380 (SAPLKRKETSDKTSKAAAANKKTKAGGKKK). A compositionally biased stretch (basic and acidic residues) spans 355 to 364 (KRKETSDKTS). Residues 371-380 (KKTKAGGKKK) show a composition bias toward basic residues.

It belongs to the XPG/RAD2 endonuclease family. FEN1 subfamily. Interacts with PCNA. Three molecules of FEN1 bind to one PCNA trimer with each molecule binding to one PCNA monomer. PCNA stimulates the nuclease activity without altering cleavage specificity. Mg(2+) serves as cofactor. Phosphorylated. Phosphorylation upon DNA damage induces relocalization to the nuclear plasma.

Its subcellular location is the nucleus. The protein resides in the nucleolus. It is found in the nucleoplasm. It localises to the mitochondrion. Its function is as follows. Structure-specific nuclease with 5'-flap endonuclease and 5'-3' exonuclease activities involved in DNA replication and repair. During DNA replication, cleaves the 5'-overhanging flap structure that is generated by displacement synthesis when DNA polymerase encounters the 5'-end of a downstream Okazaki fragment. It enters the flap from the 5'-end and then tracks to cleave the flap base, leaving a nick for ligation. Also involved in the long patch base excision repair (LP-BER) pathway, by cleaving within the apurinic/apyrimidinic (AP) site-terminated flap. Acts as a genome stabilization factor that prevents flaps from equilibrating into structures that lead to duplications and deletions. Also possesses 5'-3' exonuclease activity on nicked or gapped double-stranded DNA, and exhibits RNase H activity. Also involved in replication and repair of rDNA and in repairing mitochondrial DNA. The polypeptide is Flap endonuclease 1-A (Sorghum bicolor (Sorghum)).